The chain runs to 467 residues: Constitutive acid phosphatase (467 aa).

Residues 1 to 17 form the signal peptide; that stretch reads MFKSVVYSVLAAALVNA. Histidine 75 (nucleophile) is an active-site residue. Asparagine 97, asparagine 103, asparagine 162, asparagine 192, asparagine 250, and asparagine 315 each carry an N-linked (GlcNAc...) asparagine glycan. Aspartate 338 functions as the Proton donor in the catalytic mechanism. Residues asparagine 356, asparagine 390, asparagine 439, asparagine 445, asparagine 456, and asparagine 461 are each glycosylated (N-linked (GlcNAc...) asparagine).

Belongs to the histidine acid phosphatase family.

The catalysed reaction is a phosphate monoester + H2O = an alcohol + phosphate. The chain is Constitutive acid phosphatase (PHO3) from Saccharomyces cerevisiae (strain ATCC 204508 / S288c) (Baker's yeast).